The following is a 102-amino-acid chain: Small ribosomal subunit protein uS10 (102 aa).

This sequence belongs to the universal ribosomal protein uS10 family. Part of the 30S ribosomal subunit.

Involved in the binding of tRNA to the ribosomes. This is Small ribosomal subunit protein uS10 from Methylobacterium nodulans (strain LMG 21967 / CNCM I-2342 / ORS 2060).